A 296-amino-acid chain; its full sequence is Nitrogenase iron protein 1 (296 aa).

11 to 18 lines the ATP pocket; the sequence is GKGGIGKS. C99 provides a ligand contact to [4Fe-4S] cluster. R102 is subject to ADP-ribosylarginine; by dinitrogenase reductase ADP-ribosyltransferase. C133 contacts [4Fe-4S] cluster.

It belongs to the NifH/BchL/ChlL family. In terms of assembly, homodimer. It depends on [4Fe-4S] cluster as a cofactor. Post-translationally, the reversible ADP-ribosylation of Arg-102 inactivates the nitrogenase reductase and regulates nitrogenase activity.

It carries out the reaction N2 + 8 reduced [2Fe-2S]-[ferredoxin] + 16 ATP + 16 H2O = H2 + 8 oxidized [2Fe-2S]-[ferredoxin] + 2 NH4(+) + 16 ADP + 16 phosphate + 6 H(+). Its function is as follows. The key enzymatic reactions in nitrogen fixation are catalyzed by the nitrogenase complex, which has 2 components: the iron protein and the molybdenum-iron protein. This Azorhizobium caulinodans (strain ATCC 43989 / DSM 5975 / JCM 20966 / LMG 6465 / NBRC 14845 / NCIMB 13405 / ORS 571) protein is Nitrogenase iron protein 1 (nifH1).